The following is a 265-amino-acid chain: Exosome complex component RRP42 (265 aa).

Belongs to the RNase PH family. Component of the RNA exosome complex. Specifically part of the catalytically inactive RNA exosome core complex (Exo-9) which may associate with the catalytic subunits RRP6 and DIS3 in cytoplasmic- and nuclear-specific RNA exosome complex forms. Exo-9 is formed by a hexameric base ring of RNase PH domain-containing subunits and a cap ring consisting of CSL4, RRP4 and RRP40.

Its subcellular location is the cytoplasm. The protein resides in the nucleus. It is found in the nucleolus. In terms of biological role, non-catalytic component of the RNA exosome complex which has 3'-&gt;5' exoribonuclease activity and participates in a multitude of cellular RNA processing and degradation events. In the nucleus, the RNA exosome complex is involved in proper maturation of stable RNA species such as rRNA, snRNA and snoRNA, in the elimination of RNA processing by-products and non-coding 'pervasive' transcripts, such as antisense RNA species and cryptic unstable transcripts (CUTs), and of mRNAs with processing defects, thereby limiting or excluding their export to the cytoplasm. In the cytoplasm, the RNA exosome complex is involved in general mRNA turnover and in RNA surveillance pathways, preventing translation of aberrant mRNAs. The catalytic inactive RNA exosome core complex of 9 subunits (Exo-9) is proposed to play a pivotal role in the binding and presentation of RNA for ribonucleolysis, and to serve as a scaffold for the association with catalytic subunits and accessory proteins or complexes. RRP42 is part of the hexameric ring of RNase PH domain-containing subunits proposed to form a central channel which threads RNA substrates for degradation. This chain is Exosome complex component RRP42 (RRP42), found in Saccharomyces cerevisiae (strain ATCC 204508 / S288c) (Baker's yeast).